Consider the following 130-residue polypeptide: Fluoride-specific ion channel FluC (130 aa).

4 helical membrane-spanning segments follow: residues 9-29 (LAII…TIFL), 39-59 (YATF…VTLA), 71-91 (LLLA…ALEV), and 104-124 (VLYG…GSLI). Glycine 79 and threonine 82 together coordinate Na(+).

The protein belongs to the fluoride channel Fluc/FEX (TC 1.A.43) family.

It localises to the cell inner membrane. The enzyme catalyses fluoride(in) = fluoride(out). Its activity is regulated as follows. Na(+) is not transported, but it plays an essential structural role and its presence is essential for fluoride channel function. Its function is as follows. Fluoride-specific ion channel. Important for reducing fluoride concentration in the cell, thus reducing its toxicity. This is Fluoride-specific ion channel FluC from Synechocystis sp. (strain ATCC 27184 / PCC 6803 / Kazusa).